The chain runs to 147 residues: 3-dehydroquinate dehydratase (147 aa).

The Proton acceptor role is filled by tyrosine 23. 3 residues coordinate substrate: asparagine 75, histidine 81, and aspartate 88. Histidine 101 functions as the Proton donor in the catalytic mechanism. Substrate contacts are provided by residues 102 to 103 and arginine 112; that span reads LS.

Belongs to the type-II 3-dehydroquinase family. In terms of assembly, homododecamer.

The enzyme catalyses 3-dehydroquinate = 3-dehydroshikimate + H2O. It functions in the pathway metabolic intermediate biosynthesis; chorismate biosynthesis; chorismate from D-erythrose 4-phosphate and phosphoenolpyruvate: step 3/7. Its function is as follows. Catalyzes a trans-dehydration via an enolate intermediate. The polypeptide is 3-dehydroquinate dehydratase (Hahella chejuensis (strain KCTC 2396)).